A 661-amino-acid chain; its full sequence is MPLPSRASSTPKISKACVPCRTRKIKCNAAVVGLPCGSCVSRECPDECVLSARKRRTVKGRNAEVPRSRKNIPDTNGSILSPRQQQLPTNVSRQTTDSSHSDPVEESIHASHTGSSLRNDTPHSRDRRPPGQAQADLLYLNILQDTVNDTSAAQTDASDHQSNDEPDDSFNSQIHHWNPPPQLDDVDNEYLAKKKVFELPPPRFMDDIVKAYFDYVHPFAPILNRIDFIQSYRSGSCCIFLLHAVAAAASLYVTHDVLIGCGYPDRSTAQASFFSKAKLFHDFHCQGDPLSMLQGSMILGAIILDHPSDRDFQYWFHNSVRRASKMGVQNACLRDDGSQKLYRRIWWVLHNRDIFHFFINTQNMRLLANAPPIRPLTEADWETEDIEQWSGILSPISQAQKVSLIAQCELAQIFGNVMSVVTSSNPSAEEIHKRILPLDAWRTSLPERMHLMASFAEGEIYHLEALTTSYRFECIMCRLLRRGRWQMSDGGLREWAQQRFRSAIFELDTIVKRVMINNMIQKLPTTFITTITALLALHIESALDAAESSLIRSMARISVQHTMLALDQIRDTPAIKRALPAFEIVLSKNKLYPMSTSDTEQINTMQTMSQDQALSDGHILQPPQTDMTLPQDDQSFLYGDFIGFDFLDRWQMEQLDFTGIY.

Positions C17–C48 form a DNA-binding region, zn(2)-C6 fungal-type. Disordered regions lie at residues T57 to G131 and S151 to D185. Residues P73–S98 show a composition bias toward polar residues. Basic and acidic residues predominate over residues S99–H109. Polar residues predominate over residues A110–N119. Basic and acidic residues predominate over residues D120 to P129.

It localises to the nucleus. In terms of biological role, transcription factor that is involved in the formation of the two Fusaric acid derivatives, dehydrofusaric acid and fusarinolic acid, serving as a detoxification mechanism. The chain is Fusaric acid cluster transcription factor FUB12 from Gibberella fujikuroi (strain CBS 195.34 / IMI 58289 / NRRL A-6831) (Bakanae and foot rot disease fungus).